We begin with the raw amino-acid sequence, 254 residues long: 2,3-bisphosphoglycerate-dependent phosphoglycerate mutase (254 aa).

Substrate contacts are provided by residues 15 to 22 (RHGQSEWN), 28 to 29 (TG), R67, 94 to 97 (ERHY), K105, 121 to 122 (RR), and 188 to 189 (GN). The Tele-phosphohistidine intermediate role is filled by H16. Residue E94 is the Proton donor/acceptor of the active site.

Belongs to the phosphoglycerate mutase family. BPG-dependent PGAM subfamily.

It carries out the reaction (2R)-2-phosphoglycerate = (2R)-3-phosphoglycerate. Its pathway is carbohydrate degradation; glycolysis; pyruvate from D-glyceraldehyde 3-phosphate: step 3/5. In terms of biological role, catalyzes the interconversion of 2-phosphoglycerate and 3-phosphoglycerate. The chain is 2,3-bisphosphoglycerate-dependent phosphoglycerate mutase from Corynebacterium jeikeium (strain K411).